Consider the following 353-residue polypeptide: Peptide chain release factor 1 (353 aa).

Glutamine 230 is subject to N5-methylglutamine.

This sequence belongs to the prokaryotic/mitochondrial release factor family. In terms of processing, methylated by PrmC. Methylation increases the termination efficiency of RF1.

The protein localises to the cytoplasm. In terms of biological role, peptide chain release factor 1 directs the termination of translation in response to the peptide chain termination codons UAG and UAA. This Leptospira biflexa serovar Patoc (strain Patoc 1 / ATCC 23582 / Paris) protein is Peptide chain release factor 1.